Here is a 396-residue protein sequence, read N- to C-terminus: ATP-dependent RNA helicase eIF4A (396 aa).

A Q motif motif is present at residues 23-51; sequence YEFDDMNLNEKLLRGVFGYGFNKPSAIQQ. One can recognise a Helicase ATP-binding domain in the interval 54–223; that stretch reads IMPIIEGNDV…AKFMQNPVRI (170 aa). Residue 67–74 coordinates ATP; the sequence is AQSGTGKT. The short motif at 171–174 is the DEAD box element; it reads DEAD. A Helicase C-terminal domain is found at 234-395; that stretch reads GIKQFYVNVE…ELPSDIGTLF (162 aa).

This sequence belongs to the DEAD box helicase family. eIF4A subfamily. In terms of assembly, component of the eIF4F complex, which composition varies with external and internal environmental conditions. It is composed of at least eIF4A, eIF4E and eIF4G.

The protein resides in the cytoplasm. The catalysed reaction is ATP + H2O = ADP + phosphate + H(+). In terms of biological role, ATP-dependent RNA helicase which is a subunit of the eIF4F complex involved in cap recognition and is required for mRNA binding to ribosome. In the current model of translation initiation, eIF4A unwinds RNA secondary structures in the 5'-UTR of mRNAs which is necessary to allow efficient binding of the small ribosomal subunit, and subsequent scanning for the initiator codon. The sequence is that of ATP-dependent RNA helicase eIF4A (TIF1) from Candida glabrata (strain ATCC 2001 / BCRC 20586 / JCM 3761 / NBRC 0622 / NRRL Y-65 / CBS 138) (Yeast).